A 99-amino-acid chain; its full sequence is Nucleoid-associated protein UUR10_0100 (99 aa).

The protein belongs to the YbaB/EbfC family. Homodimer.

It is found in the cytoplasm. Its subcellular location is the nucleoid. Binds to DNA and alters its conformation. May be involved in regulation of gene expression, nucleoid organization and DNA protection. The chain is Nucleoid-associated protein UUR10_0100 from Ureaplasma urealyticum serovar 10 (strain ATCC 33699 / Western).